The following is a 174-amino-acid chain: Shikimate kinase 2 (174 aa).

12-17 (GCGKTT) is an ATP binding site. Threonine 16 and aspartate 32 together coordinate Mg(2+). 3 residues coordinate substrate: aspartate 34, arginine 58, and glycine 79. Residues 112 to 126 (EAFPEEGQRPTLTGK) are LID domain. Arginine 120 provides a ligand contact to ATP. Arginine 139 provides a ligand contact to substrate. ATP is bound at residue glutamine 155.

This sequence belongs to the shikimate kinase family. AroL subfamily. In terms of assembly, monomer. Mg(2+) is required as a cofactor.

It localises to the cytoplasm. It carries out the reaction shikimate + ATP = 3-phosphoshikimate + ADP + H(+). It participates in metabolic intermediate biosynthesis; chorismate biosynthesis; chorismate from D-erythrose 4-phosphate and phosphoenolpyruvate: step 5/7. Its function is as follows. Catalyzes the specific phosphorylation of the 3-hydroxyl group of shikimic acid using ATP as a cosubstrate. The protein is Shikimate kinase 2 of Enterobacter sp. (strain 638).